We begin with the raw amino-acid sequence, 131 residues long: Holo-[acyl-carrier-protein] synthase (131 aa).

Mg(2+) is bound by residues Asp-8 and Glu-59.

The protein belongs to the P-Pant transferase superfamily. AcpS family. It depends on Mg(2+) as a cofactor.

It is found in the cytoplasm. It carries out the reaction apo-[ACP] + CoA = holo-[ACP] + adenosine 3',5'-bisphosphate + H(+). Its function is as follows. Transfers the 4'-phosphopantetheine moiety from coenzyme A to a Ser of acyl-carrier-protein. This Rickettsia conorii (strain ATCC VR-613 / Malish 7) protein is Holo-[acyl-carrier-protein] synthase.